Reading from the N-terminus, the 269-residue chain is Type II iodothyronine deiodinase (269 aa).

The Lumenal segment spans residues 1-9 (MGILSVDLL). A helical; Signal-anchor for type III membrane protein membrane pass occupies residues 10-34 (ITLQILPVFFSNCLFLALYDSVILL). The Cytoplasmic segment spans residues 35-269 (KHVVLLLSRS…KNFSKRUKKT (235 aa)). Sec133 is an active-site residue. Residues Sec133 and Sec266 are each a non-standard amino acid (selenocysteine).

The protein belongs to the iodothyronine deiodinase family. Predominantly monomer. Can form homodimers but homodimerization is not essential for enzyme activity. Interacts with USP20 and USP33. Interacts with MARCHF6. Ubiquitinated by MARCHF6, leading to its degradation by the proteasome. Deubiquitinated by USP20 and USP33. As to expression, more expressed in pituitary than in brain, low to undetectable levels in thyroid and skeletal muscle.

The protein resides in the endoplasmic reticulum membrane. The catalysed reaction is 3,3',5-triiodo-L-thyronine + iodide + A + H(+) = L-thyroxine + AH2. It carries out the reaction 3,3'-diiodo-L-thyronine + iodide + A + H(+) = 3,3',5'-triiodo-L-thyronine + AH2. It catalyses the reaction 3'-iodo-L-thyronine + iodide + A + H(+) = 3',5'-diiodo-L-thyronine + AH2. The enzyme catalyses 3,3'-diiodothyronamine + iodide + A + H(+) = 3,3',5'-triiodothyronamine + AH2. The catalysed reaction is 3'-iodothyronamine + iodide + A + H(+) = 3',5'-diiodothyronamine + AH2. Functionally, plays a crucial role in the metabolism of thyroid hormones (TH) and has specific roles in TH activation and inactivation by deiodination.Catalyzes the deiodination of L-thyroxine (T4) to 3,5,3'-triiodothyronine (T3) and 3,3',5'-triiodothyronine (rT3) to 3,3'-diiodothyronine (3,3'-T2) via outer-ring deiodination (ORD). Catalyzes the deiodination of 3',5'-diiodothyronine (3',5'-T2) to 3'-monoiodothyronine (3'-T1) via ORD. Catalyzes the phenolic ring deiodinations of 3,3',5'-triiodothyronamine and 3',5'- diiodothyronamine. The chain is Type II iodothyronine deiodinase (DIO2) from Sus scrofa (Pig).